The chain runs to 145 residues: Large ribosomal subunit protein uL13 (145 aa).

It belongs to the universal ribosomal protein uL13 family. Part of the 50S ribosomal subunit.

Functionally, this protein is one of the early assembly proteins of the 50S ribosomal subunit, although it is not seen to bind rRNA by itself. It is important during the early stages of 50S assembly. In Bacillus velezensis (strain DSM 23117 / BGSC 10A6 / LMG 26770 / FZB42) (Bacillus amyloliquefaciens subsp. plantarum), this protein is Large ribosomal subunit protein uL13.